Here is a 272-residue protein sequence, read N- to C-terminus: Small ribosomal subunit protein uS2 (272 aa).

The segment at 251 to 272 (LLTEGAPAAEAPAEAEGETKAE) is disordered. Over residues 253-264 (TEGAPAAEAPAE) the composition is skewed to low complexity.

It belongs to the universal ribosomal protein uS2 family.

In Bifidobacterium adolescentis (strain ATCC 15703 / DSM 20083 / NCTC 11814 / E194a), this protein is Small ribosomal subunit protein uS2.